We begin with the raw amino-acid sequence, 528 residues long: Phosphoenolpyruvate carboxykinase (ATP) (528 aa).

Arginine 56, tyrosine 192, and lysine 198 together coordinate substrate. Residues lysine 198, histidine 217, and 233-241 (GLSGTGKTT) contribute to the ATP site. Residues lysine 198 and histidine 217 each contribute to the Mn(2+) site. Aspartate 254 lines the Mn(2+) pocket. The ATP site is built by glutamate 282, arginine 319, and threonine 444. Arginine 319 is a substrate binding site.

Belongs to the phosphoenolpyruvate carboxykinase (ATP) family. Requires Mn(2+) as cofactor.

It localises to the cytoplasm. It carries out the reaction oxaloacetate + ATP = phosphoenolpyruvate + ADP + CO2. Its pathway is carbohydrate biosynthesis; gluconeogenesis. Functionally, involved in the gluconeogenesis. Catalyzes the conversion of oxaloacetate (OAA) to phosphoenolpyruvate (PEP) through direct phosphoryl transfer between the nucleoside triphosphate and OAA. The sequence is that of Phosphoenolpyruvate carboxykinase (ATP) from Geobacillus thermodenitrificans (strain NG80-2).